Consider the following 158-residue polypeptide: NADH-quinone oxidoreductase subunit B (158 aa).

4 residues coordinate [4Fe-4S] cluster: C37, C38, C102, and C132.

Belongs to the complex I 20 kDa subunit family. NDH-1 is composed of 14 different subunits. Subunits NuoB, C, D, E, F, and G constitute the peripheral sector of the complex. [4Fe-4S] cluster serves as cofactor.

It is found in the cell inner membrane. It catalyses the reaction a quinone + NADH + 5 H(+)(in) = a quinol + NAD(+) + 4 H(+)(out). Functionally, NDH-1 shuttles electrons from NADH, via FMN and iron-sulfur (Fe-S) centers, to quinones in the respiratory chain. Couples the redox reaction to proton translocation (for every two electrons transferred, four hydrogen ions are translocated across the cytoplasmic membrane), and thus conserves the redox energy in a proton gradient. The chain is NADH-quinone oxidoreductase subunit B from Nitrosomonas europaea (strain ATCC 19718 / CIP 103999 / KCTC 2705 / NBRC 14298).